Here is a 523-residue protein sequence, read N- to C-terminus: Sensory neuron membrane protein 1 (523 aa).

Residues 1–11 (MQLPRELKYAA) are Cytoplasmic-facing. Residues 12–32 (IAGGVALFGLIFGWVLFPTIL) traverse the membrane as a helical segment. Residues 33 to 458 (KSQLKKEMAL…HQLFIPKRVV (426 aa)) are Extracellular-facing. N-linked (GlcNAc...) asparagine glycosylation occurs at Asn-229. Intrachain disulfides connect Cys-268–Cys-333, Cys-297–Cys-352, and Cys-335–Cys-341. N-linked (GlcNAc...) asparagine glycosylation is present at Asn-440. A helical transmembrane segment spans residues 459–479 (GVLRWWMVSFGSLGAVIGIVF). The Cytoplasmic segment spans residues 480–523 (HFRDHIMRLAVSGDTKVSKVIPEVEEQKDISVIGQAQEPAKVNI).

It belongs to the CD36 family.

The protein localises to the cell membrane. In terms of biological role, plays an olfactory role that is not restricted to pheromone sensitivity. This chain is Sensory neuron membrane protein 1, found in Helicoverpa assulta (Oriental tobacco budworm).